We begin with the raw amino-acid sequence, 846 residues long: Envelope glycoprotein gp160 (846 aa).

The first 21 residues, 1–21 (MSGKIQLLVAFLLTSACLIYC), serve as a signal peptide directing secretion. At 22–671 (TKYVTVFYGV…LTSWIKYIQY (650 aa)) the chain is on the extracellular side. N36 carries an N-linked (GlcNAc...) asparagine; by host glycan. Residues C43 and C56 are joined by a disulfide bond. N-linked (GlcNAc...) asparagine; by host glycosylation is found at N69, N113, N132, N142, N157, N184, N197, N229, N232, N239, N263, N269, N280, N291, N301, N357, N363, N390, N400, N455, and N458. 5 disulfides stabilise this stretch: C100–C205, C107–C196, C112–C154, C218–C248, and C228–C240. A V1 region spans residues 112 to 153 (CNASTESAVATTSPSGPDMINDTDPCIQLNNCSGLREEDMVE). Positions 154–196 (CQFNMTGLELDKKKQYSETWYSKDVVCESDNSTDRKRCYMNHC) are V2. The V3 stretch occupies residues 296–329 (CRRPENKTVVPITLMSGRRFHSQKIINKKPRQAW). A disulfide bond links C296 and C330. Disulfide bonds link C382-C438 and C389-C411. Positions 389-411 (CNMTWFLNWVENKTGQQHNYVPC) are V4. The interval 454–461 (DNRTNITF) is V5. Positions 504–524 (GVLVLGFLGFLTTAGAAMGAA) are fusion peptide. An immunosuppression region spans residues 567 to 583 (LQARVTAIEKYLADQAR). N-linked (GlcNAc...) asparagine; by host glycans are attached at residues N603, N612, and N628. Positions 616-643 (QEWEHKIRFLEANISESLEQAQIQQEKN) form a coiled coil. The MPER; binding to GalCer stretch occupies residues 649–670 (KLNSWDVFGNWFDLTSWIKYIQ). A helical transmembrane segment spans residues 672–692 (GVMIVVGIVALRIVIYVVQML). The Cytoplasmic portion of the chain corresponds to 693–846 (SRLRKGYRPV…IRQGAEIALL (154 aa)). The YXXV motif; contains endocytosis signal motif lies at 699–702 (YRPV). C765 carries the S-palmitoyl cysteine; by host lipid modification. Residues 845–846 (LL) carry the Di-leucine internalization motif motif.

As to quaternary structure, the mature envelope protein (Env) consists of a homotrimer of non-covalently associated gp120-gp41 heterodimers. The resulting complex protrudes from the virus surface as a spike. There seems to be as few as 10 spikes on the average virion. Interacts with human CD4, CCR5 and CXCR4, to form a P4HB/PDI-CD4-CXCR4-gp120 complex. Gp120 also interacts with the C-type lectins CD209/DC-SIGN and CLEC4M/DC-SIGNR (collectively referred to as DC-SIGN(R)). Gp120 and gp41 interact with GalCer. The mature envelope protein (Env) consists of a homotrimer of non-covalently associated gp120-gp41 heterodimers. The resulting complex protrudes from the virus surface as a spike. There seems to be as few as 10 spikes on the average virion. In terms of processing, specific enzymatic cleavages in vivo yield mature proteins. Envelope glycoproteins are synthesized as an inactive precursor that is heavily N-glycosylated and processed likely by host cell furin in the Golgi to yield the mature SU and TM proteins. The cleavage site between SU and TM requires the minimal sequence [KR]-X-[KR]-R. Post-translationally, palmitoylation of the transmembrane protein and of Env polyprotein (prior to its proteolytic cleavage) is essential for their association with host cell membrane lipid rafts. Palmitoylation is therefore required for envelope trafficking to classical lipid rafts, but not for viral replication.

It localises to the virion membrane. The protein localises to the host cell membrane. The protein resides in the host endosome membrane. Functionally, the surface protein gp120 (SU) attaches the virus to the host lymphoid cell by binding to the primary receptor CD4. This interaction induces a structural rearrangement creating a high affinity binding site for a chemokine coreceptor like CXCR4 and/or CCR5. This peculiar 2 stage receptor-interaction strategy allows gp120 to maintain the highly conserved coreceptor-binding site in a cryptic conformation, protected from neutralizing antibodies. Since CD4 also displays a binding site for the disulfide-isomerase P4HB/PDI, a P4HB/PDI-CD4-CXCR4-gp120 complex may form. In that complex, P4HB/PDI could reach and reduce gp120 disulfide bonds, causing major conformational changes in gp120. TXN, another PDI family member could also be involved in disulfide rearrangements in Env during fusion. These changes are transmitted to the transmembrane protein gp41 and are thought to activate its fusogenic potential by unmasking its fusion peptide. The surface protein gp120 is a ligand for CD209/DC-SIGN and CLEC4M/DC-SIGNR, which are respectively found on dendritic cells (DCs), and on endothelial cells of liver sinusoids and lymph node sinuses. These interactions allow capture of viral particles at mucosal surfaces by these cells and subsequent transmission to permissive cells. DCs are professional antigen presenting cells, critical for host immunity by inducing specific immune responses against a broad variety of pathogens. They act as sentinels in various tissues where they take up antigen, process it, and present it to T-cells following migration to lymphoid organs. HIV subverts the migration properties of dendritic cells to gain access to CD4+ T-cells in lymph nodes. Virus transmission to permissive T-cells occurs either in trans (without DCs infection, through viral capture and transmission), or in cis (following DCs productive infection, through the usual CD4-gp120 interaction), thereby inducing a robust infection. In trans infection, bound virions remain infectious over days and it is proposed that they are not degraded, but protected in non-lysosomal acidic organelles within the DCs close to the cell membrane thus contributing to the viral infectious potential during DCs' migration from the periphery to the lymphoid tissues. On arrival at lymphoid tissues, intact virions recycle back to DCs' cell surface allowing virus transmission to CD4+ T-cells. Virion capture also seems to lead to MHC-II-restricted viral antigen presentation, and probably to the activation of HIV-specific CD4+ cells. In terms of biological role, the transmembrane protein gp41 (TM) acts as a class I viral fusion protein. Under the current model, the protein has at least 3 conformational states: pre-fusion native state, pre-hairpin intermediate state, and post-fusion hairpin state. During fusion of viral and target intracellular membranes, the coiled coil regions (heptad repeats) assume a trimer-of-hairpins structure, positioning the fusion peptide in close proximity to the C-terminal region of the ectodomain. The formation of this structure appears to drive apposition and subsequent fusion of viral and target cell membranes. Complete fusion occurs in host cell endosomes and is dynamin-dependent, however some lipid transfer might occur at the plasma membrane. The virus undergoes clathrin-dependent internalization long before endosomal fusion, thus minimizing the surface exposure of conserved viral epitopes during fusion and reducing the efficacy of inhibitors targeting these epitopes. Membranes fusion leads to delivery of the nucleocapsid into the cytoplasm. Its function is as follows. The envelope glycoprotein gp160 precursor down-modulates cell surface CD4 antigen by interacting with it in the endoplasmic reticulum and blocking its transport to the cell surface. Functionally, the gp120-gp41 heterodimer seems to contribute to T-cell depletion during HIV-1 infection. The envelope glycoproteins expressed on the surface of infected cells induce apoptosis through an interaction with uninfected cells expressing the receptor (CD4) and the coreceptors CXCR4 or CCR5. This type of bystander killing may be obtained by at least three distinct mechanisms. First, the interaction between the 2 cells can induce cellular fusion followed by nuclear fusion within the syncytium. Syncytia are condemned to die from apoptosis. Second, the 2 interacting cells may not fuse entirely and simply exchange plasma membrane lipids, after a sort of hemifusion process, followed by rapid death. Third, it is possible that virus-infected cells, on the point of undergoing apoptosis, fuse with CD4-expressing cells, in which case apoptosis is rapidly transmitted from one cell to the other and thus occurs in a sort of contagious fashion. The gp120-gp41 heterodimer allows rapid transcytosis of the virus through CD4 negative cells such as simple epithelial monolayers of the intestinal, rectal and endocervical epithelial barriers. Both gp120 and gp41 specifically recognize glycosphingolipids galactosyl-ceramide (GalCer) or 3' sulfo-galactosyl-ceramide (GalS) present in the lipid rafts structures of epithelial cells. Binding to these alternative receptors allows the rapid transcytosis of the virus through the epithelial cells. This transcytotic vesicle-mediated transport of virions from the apical side to the basolateral side of the epithelial cells does not involve infection of the cells themselves. This Human immunodeficiency virus type 2 subtype A (isolate SBLISY) (HIV-2) protein is Envelope glycoprotein gp160 (env).